Reading from the N-terminus, the 192-residue chain is Recombination protein RecR (192 aa).

A C4-type zinc finger spans residues 51–66; that stretch reads CQTCFHLSADPECEIC. Residues 74–168 enclose the Toprim domain; sequence GLICVVADSR…PVSRIAYGLP (95 aa).

It belongs to the RecR family.

May play a role in DNA repair. It seems to be involved in an RecBC-independent recombinational process of DNA repair. It may act with RecF and RecO. The polypeptide is Recombination protein RecR (Parasynechococcus marenigrum (strain WH8102)).